The following is a 264-amino-acid chain: 3-methyl-2-oxobutanoate hydroxymethyltransferase (264 aa).

Mg(2+) is bound by residues D45 and D84. 3-methyl-2-oxobutanoate-binding positions include 45-46 (DS), D84, and K113. Residue E115 coordinates Mg(2+). The active-site Proton acceptor is E182.

It belongs to the PanB family. As to quaternary structure, homodecamer; pentamer of dimers. Mg(2+) is required as a cofactor.

It is found in the cytoplasm. The enzyme catalyses 3-methyl-2-oxobutanoate + (6R)-5,10-methylene-5,6,7,8-tetrahydrofolate + H2O = 2-dehydropantoate + (6S)-5,6,7,8-tetrahydrofolate. It participates in cofactor biosynthesis; (R)-pantothenate biosynthesis; (R)-pantoate from 3-methyl-2-oxobutanoate: step 1/2. Catalyzes the reversible reaction in which hydroxymethyl group from 5,10-methylenetetrahydrofolate is transferred onto alpha-ketoisovalerate to form ketopantoate. This is 3-methyl-2-oxobutanoate hydroxymethyltransferase from Helicobacter hepaticus (strain ATCC 51449 / 3B1).